Here is a 232-residue protein sequence, read N- to C-terminus: Noggin (232 aa).

The first 27 residues, 1 to 27 (MERCPSLGVTLYALVVVLGLRATPAGG), serve as a signal peptide directing secretion. Residue Asn62 is glycosylated (N-linked (GlcNAc...) asparagine). The interval 77–96 (GFMATSPPEDRPGGGGGAAG) is disordered. Cystine bridges form between Cys155-Cys192, Cys178-Cys228, Cys184-Cys230, and Cys207-Cys215.

This sequence belongs to the noggin family. As to quaternary structure, homodimer. Interacts with GDF5; inhibits chondrocyte differentiation.

It localises to the secreted. Inhibitor of bone morphogenetic proteins (BMP) signaling which is required for growth and patterning of the neural tube and somite. Essential for cartilage morphogenesis and joint formation. Inhibits chondrocyte differentiation through its interaction with GDF5 and, probably, GDF6. This chain is Noggin (NOG), found in Homo sapiens (Human).